A 428-amino-acid chain; its full sequence is Phosphomethylpyrimidine synthase 1 (428 aa).

Residues Met-94, Tyr-123, His-162, 184 to 186 (SRG), 225 to 228 (NGMR), and Glu-264 each bind substrate. A Zn(2+)-binding site is contributed by His-268. Residue Tyr-291 coordinates substrate. His-332 is a Zn(2+) binding site. 3 residues coordinate [4Fe-4S] cluster: Cys-408, Cys-411, and Cys-415.

The protein belongs to the ThiC family. [4Fe-4S] cluster serves as cofactor.

The enzyme catalyses 5-amino-1-(5-phospho-beta-D-ribosyl)imidazole + S-adenosyl-L-methionine = 4-amino-2-methyl-5-(phosphooxymethyl)pyrimidine + CO + 5'-deoxyadenosine + formate + L-methionine + 3 H(+). It functions in the pathway cofactor biosynthesis; thiamine diphosphate biosynthesis. Catalyzes the synthesis of the hydroxymethylpyrimidine phosphate (HMP-P) moiety of thiamine from aminoimidazole ribotide (AIR) in a radical S-adenosyl-L-methionine (SAM)-dependent reaction. This chain is Phosphomethylpyrimidine synthase 1, found in Methanosarcina barkeri (strain Fusaro / DSM 804).